The following is a 566-amino-acid chain: Arginine--tRNA ligase (566 aa).

Positions 123–133 (PNIAKPFHIGH) match the 'HIGH' region motif.

The protein belongs to the class-I aminoacyl-tRNA synthetase family. In terms of assembly, monomer.

The protein localises to the cytoplasm. The enzyme catalyses tRNA(Arg) + L-arginine + ATP = L-arginyl-tRNA(Arg) + AMP + diphosphate. The protein is Arginine--tRNA ligase of Clostridioides difficile (strain 630) (Peptoclostridium difficile).